A 491-amino-acid chain; its full sequence is Protein nucleotidyltransferase YdiU (491 aa).

Residues glycine 88, glycine 90, arginine 91, lysine 111, aspartate 123, glycine 124, arginine 174, and arginine 181 each contribute to the ATP site. Residue aspartate 250 is the Proton acceptor of the active site. Asparagine 251 and aspartate 260 together coordinate Mg(2+). Residue aspartate 260 coordinates ATP.

The protein belongs to the SELO family. Mg(2+) serves as cofactor. The cofactor is Mn(2+).

The enzyme catalyses L-seryl-[protein] + ATP = 3-O-(5'-adenylyl)-L-seryl-[protein] + diphosphate. It carries out the reaction L-threonyl-[protein] + ATP = 3-O-(5'-adenylyl)-L-threonyl-[protein] + diphosphate. It catalyses the reaction L-tyrosyl-[protein] + ATP = O-(5'-adenylyl)-L-tyrosyl-[protein] + diphosphate. The catalysed reaction is L-histidyl-[protein] + UTP = N(tele)-(5'-uridylyl)-L-histidyl-[protein] + diphosphate. The enzyme catalyses L-seryl-[protein] + UTP = O-(5'-uridylyl)-L-seryl-[protein] + diphosphate. It carries out the reaction L-tyrosyl-[protein] + UTP = O-(5'-uridylyl)-L-tyrosyl-[protein] + diphosphate. In terms of biological role, nucleotidyltransferase involved in the post-translational modification of proteins. It can catalyze the addition of adenosine monophosphate (AMP) or uridine monophosphate (UMP) to a protein, resulting in modifications known as AMPylation and UMPylation. This is Protein nucleotidyltransferase YdiU from Bradyrhizobium sp. (strain BTAi1 / ATCC BAA-1182).